Consider the following 988-residue polypeptide: Chitin synthase 1 (988 aa).

The interval 29–75 is disordered; that stretch reads QHHWPPSSGSSLGRAPSIPLSSSNPRSPIRPSTPSRVSTDWTRPPAP. Positions 44-66 are enriched in low complexity; sequence PSIPLSSSNPRSPIRPSTPSRVS. The next 7 membrane-spanning stretches (helical) occupy residues 577 to 596, 616 to 636, 656 to 676, 732 to 752, 764 to 784, 864 to 884, and 911 to 931; these read WLNG…KQIW, FISL…FYFV, IFVI…ILSL, IFTN…LMSF, SAQY…YAFC, YVVA…SEAY, and AIGS…EGRI. Residues 950–988 form a disordered region; it reads AGLGSGFSESGKTGITSGSGMSGMSLSDVTSKISEKLAG. The span at 957 to 976 shows a compositional bias: low complexity; that stretch reads SESGKTGITSGSGMSGMSLS.

This sequence belongs to the chitin synthase family. Class II subfamily.

It localises to the cell membrane. The enzyme catalyses [(1-&gt;4)-N-acetyl-beta-D-glucosaminyl](n) + UDP-N-acetyl-alpha-D-glucosamine = [(1-&gt;4)-N-acetyl-beta-D-glucosaminyl](n+1) + UDP + H(+). Polymerizes chitin, a structural polymer of the cell wall and septum, by transferring the sugar moiety of UDP-GlcNAc to the non-reducing end of the growing chitin polymer. CHS1 mainly responsible for normal yeast cell reproductive growth. This Exophiala dermatitidis (Black yeast-like fungus) protein is Chitin synthase 1.